The primary structure comprises 442 residues: FBD-associated F-box protein At1g66310 (442 aa).

The F-box domain occupies 18–64 (VDWLRDLPESLLCHILLNLPTKDVVKTSVLSSKWRNLWRLVPGLDLD). The 53-residue stretch at 363-415 (KRRTSVLSGPRRLLSSLEYVEIESPLTGEVFEMKLVSYLLENSPILKKLTINL) folds into the FBD domain.

In Arabidopsis thaliana (Mouse-ear cress), this protein is FBD-associated F-box protein At1g66310.